We begin with the raw amino-acid sequence, 331 residues long: D-alanine--D-alanine ligase (331 aa).

In terms of domain architecture, ATP-grasp spans 121-327 (KLWYDALGIP…FSQFLENCVR (207 aa)). 151–206 (AFESWGKVFVKAARQGSSVGCYQVNQVEELSEAINKAFTFSDQVLIEKSVVPRELE) contributes to the ATP binding site. Residues Asp-281, Glu-294, and Asn-296 each coordinate Mg(2+).

Belongs to the D-alanine--D-alanine ligase family. Mg(2+) is required as a cofactor. The cofactor is Mn(2+).

It is found in the cytoplasm. The enzyme catalyses 2 D-alanine + ATP = D-alanyl-D-alanine + ADP + phosphate + H(+). It participates in cell wall biogenesis; peptidoglycan biosynthesis. Cell wall formation. This is D-alanine--D-alanine ligase from Vibrio atlanticus (strain LGP32) (Vibrio splendidus (strain Mel32)).